We begin with the raw amino-acid sequence, 457 residues long: GTPase Der (457 aa).

EngA-type G domains lie at 4 to 169 and 177 to 352; these read PTIA…PENN and IMMS…NQHR. GTP-binding positions include 10–17, 57–61, 120–123, 183–190, 230–234, and 295–298; these read GRPNVGKS, DTGGL, NKCE, DTAGI, and NKWD. One can recognise a KH-like domain in the interval 353 to 438; it reads RRVTTSVVNE…PLILLWRGKQ (86 aa).

Belongs to the TRAFAC class TrmE-Era-EngA-EngB-Septin-like GTPase superfamily. EngA (Der) GTPase family. In terms of assembly, associates with the 50S ribosomal subunit.

Its function is as follows. GTPase that plays an essential role in the late steps of ribosome biogenesis. In Prochlorococcus marinus (strain MIT 9215), this protein is GTPase Der.